The primary structure comprises 212 residues: Cytidylate kinase (212 aa).

7-15 (GPAASGKGT) serves as a coordination point for ATP.

Belongs to the cytidylate kinase family. Type 1 subfamily.

It is found in the cytoplasm. It catalyses the reaction CMP + ATP = CDP + ADP. It carries out the reaction dCMP + ATP = dCDP + ADP. The chain is Cytidylate kinase from Rhodopseudomonas palustris (strain ATCC BAA-98 / CGA009).